A 362-amino-acid polypeptide reads, in one-letter code: Chorismate synthase (362 aa).

2 residues coordinate NADP(+): arginine 48 and arginine 54. FMN is bound by residues 125-127, 238-239, glycine 278, 293-297, and arginine 319; these read RSS, NA, and KPTSS.

Belongs to the chorismate synthase family. Homotetramer. Requires FMNH2 as cofactor.

The catalysed reaction is 5-O-(1-carboxyvinyl)-3-phosphoshikimate = chorismate + phosphate. It functions in the pathway metabolic intermediate biosynthesis; chorismate biosynthesis; chorismate from D-erythrose 4-phosphate and phosphoenolpyruvate: step 7/7. Catalyzes the anti-1,4-elimination of the C-3 phosphate and the C-6 proR hydrogen from 5-enolpyruvylshikimate-3-phosphate (EPSP) to yield chorismate, which is the branch point compound that serves as the starting substrate for the three terminal pathways of aromatic amino acid biosynthesis. This reaction introduces a second double bond into the aromatic ring system. This chain is Chorismate synthase, found in Psychromonas ingrahamii (strain DSM 17664 / CCUG 51855 / 37).